The primary structure comprises 705 residues: Bifunctional arginine dihydrolase/ornithine cyclodeaminase ArgZ (705 aa).

Residues 10–269 form an arginine dihydrolase region; it reads CPPDHYDVDY…GAAKCLTLRV (260 aa). L-arginine-binding residues include Asn22, Asn71, Arg90, Arg139, His168, Asp170, Ala258, and Cys264. Positions 22, 71, 90, 139, and 168 each coordinate L-ornithine. The active-site Proton donor/acceptor is the His168. Residues Ala258 and Cys264 each contribute to the L-ornithine site. Cys264 acts as the Nucleophile in catalysis. Residues 285–695 form an ornithine cyclodeaminase region; sequence SRVIRMEGHL…SLLVRQLQQL (411 aa). Positions 525, 526, 604, 636, 637, 638, 639, 657, 680, and 681 each coordinate NAD(+).

The protein in the N-terminal section; belongs to the DDAH family. In the C-terminal section; belongs to the AgrE/ArgZ ornithine cyclodeaminase family. Homotetramer. Requires NAD(+) as cofactor.

The catalysed reaction is L-arginine + 2 H2O + 2 H(+) = L-ornithine + 2 NH4(+) + CO2. It catalyses the reaction L-ornithine = L-proline + NH4(+). Its activity is regulated as follows. Arginine dihydrolase activity does not require a metal cofactor. Functionally, bifunctional enzyme involved in a cyanobacterial arginine utilization pathway that enables cellular adaptation to nitrogen fluctuations. Catalyzes the hydrolysis of arginine to ornithine, with the release of ammonia and carbon dioxide. Then, probably catalyzes the conversion of ornithine to proline, with the release of ammonia. Is highly specific for arginine and cannot hydrolyze citrulline, dimethylarginine and other amino acids. This is Bifunctional arginine dihydrolase/ornithine cyclodeaminase ArgZ from Synechocystis sp. (strain ATCC 27184 / PCC 6803 / Kazusa).